We begin with the raw amino-acid sequence, 399 residues long: Glutamyl-tRNA reductase (399 aa).

Residues 45–48 (TCNR), Ser-93, 98–100 (EDQ), and Gln-104 contribute to the substrate site. Catalysis depends on Cys-46, which acts as the Nucleophile. 173-178 (GAGKMG) contributes to the NADP(+) binding site.

Belongs to the glutamyl-tRNA reductase family. Homodimer.

It catalyses the reaction (S)-4-amino-5-oxopentanoate + tRNA(Glu) + NADP(+) = L-glutamyl-tRNA(Glu) + NADPH + H(+). The protein operates within porphyrin-containing compound metabolism; protoporphyrin-IX biosynthesis; 5-aminolevulinate from L-glutamyl-tRNA(Glu): step 1/2. Catalyzes the NADPH-dependent reduction of glutamyl-tRNA(Glu) to glutamate 1-semialdehyde (GSA). The chain is Glutamyl-tRNA reductase from Methanobrevibacter smithii (strain ATCC 35061 / DSM 861 / OCM 144 / PS).